Consider the following 92-residue polypeptide: Large ribosomal subunit protein bL31 (92 aa).

Belongs to the bacterial ribosomal protein bL31 family. Type A subfamily. Part of the 50S ribosomal subunit.

Its function is as follows. Binds the 23S rRNA. This chain is Large ribosomal subunit protein bL31, found in Mesoplasma florum (strain ATCC 33453 / NBRC 100688 / NCTC 11704 / L1) (Acholeplasma florum).